Consider the following 321-residue polypeptide: uncharacterized protein (321 aa).

The 185-residue stretch at 130–314 (NLVYDLETTG…NDVDALIKIM (185 aa)) folds into the Exonuclease domain.

This is an uncharacterized protein from Acanthamoeba polyphaga (Amoeba).